We begin with the raw amino-acid sequence, 432 residues long: Enolase (432 aa).

(2R)-2-phosphoglycerate is bound at residue Q167. Catalysis depends on E209, which acts as the Proton donor. Positions 246, 290, and 317 each coordinate Mg(2+). (2R)-2-phosphoglycerate is bound by residues K342, R371, S372, and K393. K342 acts as the Proton acceptor in catalysis.

The protein belongs to the enolase family. In terms of assembly, component of the RNA degradosome, a multiprotein complex involved in RNA processing and mRNA degradation. Mg(2+) serves as cofactor.

It localises to the cytoplasm. Its subcellular location is the secreted. The protein localises to the cell surface. It catalyses the reaction (2R)-2-phosphoglycerate = phosphoenolpyruvate + H2O. It participates in carbohydrate degradation; glycolysis; pyruvate from D-glyceraldehyde 3-phosphate: step 4/5. Catalyzes the reversible conversion of 2-phosphoglycerate (2-PG) into phosphoenolpyruvate (PEP). It is essential for the degradation of carbohydrates via glycolysis. The chain is Enolase from Salmonella dublin (strain CT_02021853).